A 551-amino-acid chain; its full sequence is MSFQELLNQVGSLGRFQILQIVFLLLLNAIVVPHIAMENFTAAIPNHRCWVPILDNDTASDNGSRILSQDDLLRISIPLDSNLRPEKCRRFAQPQWHLLHLNGTFSNVSEPDTEPCVDGWVYDRSNFLSTIVTEWDLVCESQALNSVTKFSFMIGLFIGGIICGHLSDRLGRKFILTCALLQFAITETCVAFAPSFFIYCSLRFLAGLSVEPILVNSHLLMLEWTSPKFLTMMAALLSCAPNIGYMISAGLAFLFRIWHHLQLTMSVPIFFFLILTRWLSESARWLIVTNKPQKGLKELRKVAHMNGMKNSGDLTMEIVRTSMKAELEAAKTKPSLRDLFHTSILRKRICVLSFMRLFFTVSIFGLAVHLQHLSSNIILLQFLISALAILVSVIGPFVLNHIGRRITYLVLMSLRGIFILIAVFVPQEMQTLRIIMATLAEGISSLCVGVSRLHTNELLPTTLRATAVGVIGFFGNSGSFLSPLFMLLATYYANMPWIFYGGFSIFNAFTVFLLPETKNQPLPDSTHDVGNDWKESRKGKKEDPIIKVTRF.

At 1-15 (MSFQELLNQVGSLGR) the chain is on the cytoplasmic side. Residues 16–36 (FQILQIVFLLLLNAIVVPHIA) traverse the membrane as a helical segment. Topologically, residues 37 to 145 (MENFTAAIPN…DLVCESQALN (109 aa)) are extracellular. 5 N-linked (GlcNAc...) asparagine glycosylation sites follow: N39, N56, N62, N102, and N107. A helical membrane pass occupies residues 146 to 166 (SVTKFSFMIGLFIGGIICGHL). At 167–173 (SDRLGRK) the chain is on the cytoplasmic side. Residues 174-194 (FILTCALLQFAITETCVAFAP) traverse the membrane as a helical segment. The Extracellular segment spans residues 195 to 203 (SFFIYCSLR). A helical transmembrane segment spans residues 204–224 (FLAGLSVEPILVNSHLLMLEW). Residues 225 to 234 (TSPKFLTMMA) are Cytoplasmic-facing. The chain crosses the membrane as a helical span at residues 235–255 (ALLSCAPNIGYMISAGLAFLF). Residues 256–258 (RIW) are Extracellular-facing. A helical transmembrane segment spans residues 259–279 (HHLQLTMSVPIFFFLILTRWL). Residues 280–348 (SESARWLIVT…LFHTSILRKR (69 aa)) lie on the Cytoplasmic side of the membrane. A helical membrane pass occupies residues 349–369 (ICVLSFMRLFFTVSIFGLAVH). Residues 370–376 (LQHLSSN) lie on the Extracellular side of the membrane. The helical transmembrane segment at 377–397 (IILLQFLISALAILVSVIGPF) threads the bilayer. Over 398 to 405 (VLNHIGRR) the chain is Cytoplasmic. The helical transmembrane segment at 406 to 426 (ITYLVLMSLRGIFILIAVFVP) threads the bilayer. Residues 427 to 432 (QEMQTL) lie on the Extracellular side of the membrane. Residues 433–453 (RIIMATLAEGISSLCVGVSRL) form a helical membrane-spanning segment. The Cytoplasmic segment spans residues 454–467 (HTNELLPTTLRATA). The chain crosses the membrane as a helical span at residues 468-488 (VGVIGFFGNSGSFLSPLFMLL). Residues 489–494 (ATYYAN) lie on the Extracellular side of the membrane. A helical transmembrane segment spans residues 495–515 (MPWIFYGGFSIFNAFTVFLLP). At 516–551 (ETKNQPLPDSTHDVGNDWKESRKGKKEDPIIKVTRF) the chain is on the cytoplasmic side. Residues 523-551 (PDSTHDVGNDWKESRKGKKEDPIIKVTRF) are disordered. The segment covering 525-545 (STHDVGNDWKESRKGKKEDPI) has biased composition (basic and acidic residues).

It belongs to the major facilitator (TC 2.A.1) superfamily. Organic cation transporter (TC 2.A.1.19) family. Expressed in proximal kidney tubules, and in liver hepatocytes (at protein level).

The protein localises to the cell membrane. Functionally, does not appear to have transporter activity. Sodium-independent organic anion transporter which exhibits high specificity for L-carnitine. Can also transport salicylic acid and the drug cimetidine. The polypeptide is Solute carrier family 22 member 27 (Mus musculus (Mouse)).